The chain runs to 428 residues: Adenylosuccinate synthetase (428 aa).

GTP contacts are provided by residues 12-18 (GDEGKGK) and 40-42 (GHT). Catalysis depends on Asp13, which acts as the Proton acceptor. 2 residues coordinate Mg(2+): Asp13 and Gly40. Residues 13 to 16 (DEGK), 38 to 41 (NAGH), Thr128, Arg142, Gln223, Thr238, and Arg302 contribute to the IMP site. His41 serves as the catalytic Proton donor. 298 to 304 (TTTGRPR) provides a ligand contact to substrate. GTP contacts are provided by residues Arg304, 330-332 (SID), and 412-414 (SVG).

Belongs to the adenylosuccinate synthetase family. In terms of assembly, homodimer. The cofactor is Mg(2+).

The protein resides in the cytoplasm. It catalyses the reaction IMP + L-aspartate + GTP = N(6)-(1,2-dicarboxyethyl)-AMP + GDP + phosphate + 2 H(+). It functions in the pathway purine metabolism; AMP biosynthesis via de novo pathway; AMP from IMP: step 1/2. Functionally, plays an important role in the de novo pathway of purine nucleotide biosynthesis. Catalyzes the first committed step in the biosynthesis of AMP from IMP. This is Adenylosuccinate synthetase from Shouchella clausii (strain KSM-K16) (Alkalihalobacillus clausii).